We begin with the raw amino-acid sequence, 278 residues long: Putative ABC transporter ATP-binding protein MJ1572 (278 aa).

The ABC transporter domain maps to tyrosine 5 to glutamate 242. Residue glycine 38–threonine 45 coordinates ATP.

It belongs to the ABC transporter superfamily.

The protein resides in the cell membrane. Probably part of an ABC transporter complex. Responsible for energy coupling to the transport system. This is Putative ABC transporter ATP-binding protein MJ1572 from Methanocaldococcus jannaschii (strain ATCC 43067 / DSM 2661 / JAL-1 / JCM 10045 / NBRC 100440) (Methanococcus jannaschii).